The primary structure comprises 405 residues: S-adenosylmethionine synthase (405 aa).

An ATP-binding site is contributed by Gly-141–Asp-146.

It belongs to the AdoMet synthase 2 family. Mg(2+) is required as a cofactor.

It catalyses the reaction L-methionine + ATP + H2O = S-adenosyl-L-methionine + phosphate + diphosphate. Its pathway is amino-acid biosynthesis; S-adenosyl-L-methionine biosynthesis; S-adenosyl-L-methionine from L-methionine: step 1/1. Its function is as follows. Catalyzes the formation of S-adenosylmethionine from methionine and ATP. This is S-adenosylmethionine synthase from Methanococcus maripaludis (Methanococcus deltae).